The following is a 450-amino-acid chain: L-galactonate dehydratase (450 aa).

Lysine 221 is an active-site residue. Mg(2+) contacts are provided by aspartate 251, glutamate 277, and glutamate 306. Histidine 356 is an active-site residue.

Belongs to the mandelate racemase/muconate lactonizing enzyme family. The cofactor is Mg(2+).

It carries out the reaction L-galactonate = 2-dehydro-3-deoxy-L-galactonate + H2O. The protein operates within carbohydrate acid metabolism. Its function is as follows. Mediates the conversion of L-galactonate to 2-dehydro-3-deoxy-L-galactonate, the second step in D-galacturonate catabolic process. In Hypocrea jecorina (Trichoderma reesei), this protein is L-galactonate dehydratase (lgd1).